Consider the following 160-residue polypeptide: Transcription elongation factor GreA (160 aa).

The stretch at Met1 to Arg72 forms a coiled coil.

The protein belongs to the GreA/GreB family.

Its function is as follows. Necessary for efficient RNA polymerase transcription elongation past template-encoded arresting sites. The arresting sites in DNA have the property of trapping a certain fraction of elongating RNA polymerases that pass through, resulting in locked ternary complexes. Cleavage of the nascent transcript by cleavage factors such as GreA or GreB allows the resumption of elongation from the new 3'terminus. GreA releases sequences of 2 to 3 nucleotides. The protein is Transcription elongation factor GreA of Streptococcus pneumoniae (strain Hungary19A-6).